The following is a 1114-amino-acid chain: MAEAPPVSGTFKFNTDAAEFIPQERKTSGLNCGTQRRLDSSRIGRRNYSSSPPCHLPRHIPYEDISAVHQHSYASGSKPKSPQGFFQSSNKSLKNHGLQNQPWQKARNEKHQNRNKKAQGLSEQTSDTSSLESVARSESGTNPREHSPSESEKEVVIADPRGAKPKKAAQLTYNYGRGPKAKGRLRSEWGNRMSPKSEDENTRPVAISHTDSSDASCRKPVVDPCVCRRNEQRRYPQKRPPWEVEGARPRPGRNPPKQESQRHINAGPKTNMSPIPKDNLRERPTKSACDTGNLAVVSKSSRRVNQEKTAVRRQDPQVLSPFPRGKQNHMLKNVETHTGSLIEQLTTEKYECMVCCELVQVTAPVWSCQSCFHVFHLNCIKKWARSPASHADGQSGWRCPACQNVSAHVPNTYTCFCGKVKNPEWSRNEIPHSCGEVCRKKQPGQDCPHSCNLLCHPGPCPPCPAFTTKTCECGRTRHTVRCGQPVSVHCSNACENILNCGQHHCAELCHGGQCQPCRIILNQVCYCGSTSRDVLCGTDVGKSDGFGDFSCLKICGKDLKCGSHTCSQVCHPQPCQPCPRLPHLVRYCPCGQTPLSQLLEHGSNARKTCMDPVPSCGKVCGKPLACGSSDFIHTCEKLCHEGDCGPCSRTSVISCRCSFRTKELPCTSLKSEDATFMCDKRCNKKRLCGRHKCNEICCVDKEHKCPLICGRKLRCGLHRCEEPCHRGNCQTCWQASFDELTCHCGASVIYPPVPCGTRPPECTQTCARIHECDHPVYHSCHSEEKCPPCTFLTQKWCMGKHELRSNIPCHLVDISCGLPCSAMLPCGMHKCQRLCHKGECLVDEACKQPCTTPRGDCGHPCMAPCHPSLPCPVTACKAKVELQCECGRRKEMVICSEASGTYQRIVAISMASKITDMQLGDSVEISKLITKKEVQQARLQCDEECAALERRKRLAEAFDITDDSDPFNVRSSASKFSDSLKDDARKDLKFVSDVEKEMETLVEAVNKGKNNKKSHCFPPMNRDHRRIIHDLAQVYGLESISYDSEPKRNVVVTAVRGKSVCPPTTLTSVIERETQTRPPPPIPHHRHQADKAPGSSTLQKIVKEAVIDYFDVQD.

The interaction with PABPC1 and PABC4 stretch occupies residues 9–26; that stretch reads GTFKFNTDAAEFIPQERK. Disordered regions lie at residues 20–220, 232–287, and 299–325; these read FIPQ…CRKP, QRRY…PTKS, and KSSR…FPRG. Residues Ser-50, Ser-81, Ser-92, Ser-126, Ser-130, and Ser-147 each carry the phosphoserine modification. Polar residues-rich tracts occupy residues 72–103 and 121–142; these read SYAS…NQPW and LSEQ…SGTN. Composition is skewed to basic and acidic residues over residues 143–156, 185–202, 232–248, and 304–315; these read PREH…KEVV, LRSE…DENT, QRRY…EGAR, and VNQEKTAVRRQD. Residue Ser-320 is modified to Phosphoserine. The RING-type; atypical zinc finger occupies 352–403; sequence CMVCCELVQVTAPVWSCQSCFHVFHLNCIKKWARSPASHADGQSGWRCPACQ. 8 consecutive NF-X1-type zinc fingers follow at residues 447-465, 500-519, 561-580, 626-649, 688-707, 715-734, 826-848, and 857-878; these read CPHS…PCPA, CGQH…PCRI, CGSH…PCPR, CGSS…PCSR, CGRH…KCPL, CGLH…TCWQ, CGMH…ACKQ, and CGHP…ACKA. Residues 988–1056 enclose the R3H domain; it reads LKFVSDVEKE…KRNVVVTAVR (69 aa). The segment at 1071–1095 is disordered; the sequence is ERETQTRPPPPIPHHRHQADKAPGS.

This sequence belongs to the NFX1 family. Interacts with PABPC1 and PABPC4. Ubiquitously expressed, with highest levels in thymus.

It localises to the nucleus. Its function is as follows. Binds to the X-box motif of MHC class II genes and represses their expression. May play an important role in regulating the duration of an inflammatory response by limiting the period in which MHC class II molecules are induced by interferon-gamma. Together with PABPC1 or PABPC4, acts as a coactivator for TERT expression. Mediates E2-dependent ubiquitination. In Mus musculus (Mouse), this protein is Transcriptional repressor NF-X1 (Nfx1).